The primary structure comprises 367 residues: CCN family member 4 (367 aa).

A signal peptide spans 1–22 (MRWLLPWTLAAVAVLMVGNILA). One can recognise an IGFBP N-terminal domain in the interval 45-118 (RPEFCKWPCE…RYAIGVCAQV (74 aa)). Cystine bridges form between C49–C73, C53–C75, C55–C76, and C62–C79. N86 is a glycosylation site (N-linked (GlcNAc...) asparagine). 2 cysteine pairs are disulfide-bonded: C87/C101 and C93/C115. The 66-residue stretch at 121-186 (VGCVLDGVRY…GQCCEQWVCD (66 aa)) folds into the VWFC domain. N143 carries N-linked (GlcNAc...) asparagine glycosylation. The region spanning 215 to 260 (NCIAYTSPWSPCSTTCGLGISTRISNVNARCWPEQESRLCNLRPCD) is the TSP type-1 domain. Cystine bridges form between C273-C310, C290-C324, C301-C340, C304-C342, and C309-C346. The 75-residue stretch at 273-347 (CLAVYQPEEA…NACFCNLSCR (75 aa)) folds into the CTCK domain. N284 carries an N-linked (GlcNAc...) asparagine glycan. An N-linked (GlcNAc...) asparagine glycan is attached at N343.

Belongs to the CCN family.

It is found in the secreted. In terms of biological role, downstream regulator in the Wnt/Frizzled-signaling pathway. Associated with cell survival. Adheres to skin and melanoma fibroblasts. In vitro binding to skin fibroblasts occurs through the proteoglycans, decorin and biglycan. The sequence is that of CCN family member 4 (Ccn4) from Rattus norvegicus (Rat).